A 547-amino-acid polypeptide reads, in one-letter code: bZIP transcription factor 29 (547 aa).

Disordered stretches follow at residues 1–199 (MGDT…SGGE), 244–312 (NSSE…DIAP), and 333–356 (GDES…TNSV). Residues 15–52 (LHSSFGTTSSSIPKNPISQLDLNPNFIRSSAPQFSKPF) are compositionally biased toward polar residues. Positions 63–73 (PSHPNLIPPTS) are enriched in pro residues. A compositionally biased stretch (polar residues) spans 74 to 89 (PFSQIPTTRQPGSHNF). Over residues 120–132 (FRDHDVSMEDRDS) the composition is skewed to basic and acidic residues. The segment covering 134 to 157 (VFNSNHSLPPSPFTRCNSTSSSSL) has biased composition (polar residues). Over residues 249 to 263 (DDSKNGNENRDDMES) the composition is skewed to basic and acidic residues. Polar residues predominate over residues 264–275 (SRASGTKTNGSD). Low complexity predominate over residues 279–294 (ESSSVNESANNNMNSS). Polar residues predominate over residues 344 to 356 (GSMSRKVSPTNSV). Residues 394 to 457 (DPKRVKRILA…MGLTNQNNEL (64 aa)) form the bZIP domain. Residues 396-417 (KRVKRILANRQSAARSKERKMR) are basic motif. Residues 416 to 469 (MRYIVELEHKVQTLQTEATTLSAQLTLLQRDMMGLTNQNNELKFRLQAMEQQAR) are a coiled coil. The segment at 422-457 (LEHKVQTLQTEATTLSAQLTLLQRDMMGLTNQNNEL) is leucine-zipper. The segment covering 517–535 (QLRQQPQQMQQQSHQQNHQ) has biased composition (low complexity). The segment at 517–547 (QLRQQPQQMQQQSHQQNHQNGTMATKSESNE) is disordered. Polar residues predominate over residues 536–547 (NGTMATKSESNE).

In terms of assembly, forms homodimers. Expressed in roots, leaves and flowers. Expressed in the root tips, lateral root primordia, and guard cells of leaves, hypocotyls and anthers.

It localises to the cytoplasm. Its subcellular location is the nucleus. Functionally, transcription factor that acts as a repressor of reproductive development, meristem size and plant growth. Regulates meristem size, cell size and cell number during plant development. Binds to the promoters of the cell cycle regulators CYCB1-2 and SMR4, and genes involved in cell wall organization, such as XTH9, EXPA1 and EXPA3. Possesses transactivation activity in yeast. Possesses transactivation activity in plant protoplasts. Plays a role in abiotic stress response by binding to the 5'-CAGCTG-3' DNA sequence found in the promoters of MYB44 and TRX8. Plays a role in osmosensory response by binding to the 5'-AGCTGT/G-3' DNA sequence found in the promoters of the hypoosmolarity-responsive genes CYP707A1 and CYP707A3. Binds to the 5'-AGCTGT-3' DNA sequence found in the promoter of the ZAT1 gene in response to abiotic stresses, such as oxidative stress, high-light, osmotic shock, salt and heat stresses. The chain is bZIP transcription factor 29 from Arabidopsis thaliana (Mouse-ear cress).